The sequence spans 141 residues: Hemoglobin subunit alpha (141 aa).

The Globin domain maps to 1 to 141; the sequence is VLSDEDKTNV…VSTVLTSKYR (141 aa). Ser-3 bears the Phosphoserine mark. At Lys-7 the chain carries N6-succinyllysine. Thr-8 carries the post-translational modification Phosphothreonine. Lys-11 is modified (N6-succinyllysine). At Lys-16 the chain carries N6-acetyllysine; alternate. The residue at position 16 (Lys-16) is an N6-succinyllysine; alternate. Tyr-24 bears the Phosphotyrosine mark. Position 35 is a phosphoserine (Ser-35). An N6-succinyllysine modification is found at Lys-40. Ser-49 carries the post-translational modification Phosphoserine. His-58 lines the O2 pocket. Heme b is bound at residue His-87. The residue at position 102 (Ser-102) is a Phosphoserine. Residue Thr-108 is modified to Phosphothreonine. Residues Ser-124 and Ser-131 each carry the phosphoserine modification. Residues Thr-134 and Thr-137 each carry the phosphothreonine modification. Ser-138 is modified (phosphoserine).

The protein belongs to the globin family. As to quaternary structure, heterotetramer of two alpha chains and two beta chains. Red blood cells.

Functionally, involved in oxygen transport from the lung to the various peripheral tissues. Its function is as follows. Hemopressin acts as an antagonist peptide of the cannabinoid receptor CNR1. Hemopressin-binding efficiently blocks cannabinoid receptor CNR1 and subsequent signaling. This chain is Hemoglobin subunit alpha (HBA), found in Trichechus inunguis (Amazon manatee).